The following is a 1079-amino-acid chain: Isoleucine--tRNA ligase (1079 aa).

Positions 53–63 match the 'HIGH' region motif; the sequence is PFANGLPHYGH. A 'KMSKS' region motif is present at residues 611–615; it reads KLSKR. Lysine 614 contributes to the ATP binding site.

Belongs to the class-I aminoacyl-tRNA synthetase family. IleS type 2 subfamily. In terms of assembly, monomer. Zn(2+) is required as a cofactor.

Its subcellular location is the cytoplasm. It catalyses the reaction tRNA(Ile) + L-isoleucine + ATP = L-isoleucyl-tRNA(Ile) + AMP + diphosphate. Catalyzes the attachment of isoleucine to tRNA(Ile). As IleRS can inadvertently accommodate and process structurally similar amino acids such as valine, to avoid such errors it has two additional distinct tRNA(Ile)-dependent editing activities. One activity is designated as 'pretransfer' editing and involves the hydrolysis of activated Val-AMP. The other activity is designated 'posttransfer' editing and involves deacylation of mischarged Val-tRNA(Ile). This chain is Isoleucine--tRNA ligase, found in Rickettsia canadensis (strain McKiel).